The primary structure comprises 148 residues: Inner membrane protein YccF (148 aa).

Residues 1-14 are Periplasmic-facing; the sequence is MRTVLNILNFVLGG. A helical transmembrane segment spans residues 15-37; sequence FATTLGWLLATLVSIVLIFTLPL. Residues 38-76 lie on the Cytoplasmic side of the membrane; sequence TRSCWEITKLSLVPYGNEAIHVDELNPAGKNVLLNTGGT. Residues 77 to 99 traverse the membrane as a helical segment; it reads VLNIFWLIFFGWWLCLMHIATGI. Over 100–102 the chain is Periplasmic; the sequence is AQC. The helical transmembrane segment at 103–125 threads the bilayer; the sequence is ISIIGIPVGIANFKIAAIALWPV. At 126–148 the chain is on the cytoplasmic side; it reads GRRVVSVETAQAAREANARRRFE.

The protein localises to the cell inner membrane. The protein is Inner membrane protein YccF (yccF) of Escherichia coli (strain K12).